A 409-amino-acid polypeptide reads, in one-letter code: Nucleoprotein (409 aa).

2 disordered regions span residues 1–64 (MSAG…SNVK) and 167–197 (RNSSAVTSRENSRPGSRDSSRGRQRSRVDDD). The segment at 30 to 161 (GTGQASWFQS…NNYRWDFIAL (132 aa)) is RNA-binding. Residues 32-157 (GQASWFQSLK…GGPDNNYRWD (126 aa)) form the CoV N NTD domain. The span at 176 to 197 (ENSRPGSRDSSRGRQRSRVDDD) shows a compositional bias: basic and acidic residues. A Phosphoserine; by host modification is found at Ser192. The CoV N CTD domain maps to 217–333 (SKQKANEMAE…ECVDGVGTRP (117 aa)). A dimerization region spans residues 228 to 335 (KYHKRAIAPG…VDGVGTRPKD (108 aa)). A disulfide bridge connects residues Cys322 and Cys325. Positions 327–409 (DGVGTRPKDD…GEGAFDDINI (83 aa)) are disordered. Residues 332–349 (RPKDDPTPRSRAASKDRN) are compositionally biased toward basic and acidic residues. The residue at position 374 (Thr374) is a Phosphothreonine; by host.

This sequence belongs to the gammacoronavirus nucleocapsid protein family. As to quaternary structure, homooligomer. Both monomeric and oligomeric forms interact with RNA. Interacts with protein M. Interacts with NSP3; this interaction serves to tether the genome to the newly translated replicase-transcriptase complex at a very early stage of infection. Post-translationally, ADP-ribosylated. The ADP-ribosylation is retained in the virion during infection. In terms of processing, phosphorylated on serine and threonine residues.

The protein localises to the virion. It localises to the host endoplasmic reticulum-Golgi intermediate compartment. Its subcellular location is the host Golgi apparatus. In terms of biological role, packages the positive strand viral genome RNA into a helical ribonucleocapsid (RNP) and plays a fundamental role during virion assembly through its interactions with the viral genome and membrane protein M. Plays an important role in enhancing the efficiency of subgenomic viral RNA transcription as well as viral replication. The chain is Nucleoprotein from Gallus gallus (Chicken).